The primary structure comprises 592 residues: Aspartate--tRNA(Asp/Asn) ligase (592 aa).

Glu-182 is a binding site for L-aspartate. Positions 206 to 209 (QIFK) are aspartate. An L-aspartate-binding site is contributed by Arg-228. ATP-binding positions include 228–230 (RDE) and Gln-237. His-455 contributes to the L-aspartate binding site. Position 489 (Glu-489) interacts with ATP. Position 496 (Arg-496) interacts with L-aspartate. 541-544 (GLDR) provides a ligand contact to ATP.

The protein belongs to the class-II aminoacyl-tRNA synthetase family. Type 1 subfamily. Homodimer.

It localises to the cytoplasm. The catalysed reaction is tRNA(Asx) + L-aspartate + ATP = L-aspartyl-tRNA(Asx) + AMP + diphosphate. Functionally, aspartyl-tRNA synthetase with relaxed tRNA specificity since it is able to aspartylate not only its cognate tRNA(Asp) but also tRNA(Asn). Reaction proceeds in two steps: L-aspartate is first activated by ATP to form Asp-AMP and then transferred to the acceptor end of tRNA(Asp/Asn). The protein is Aspartate--tRNA(Asp/Asn) ligase of Thermoanaerobacter sp. (strain X514).